The sequence spans 147 residues: Large ribosomal subunit protein uL22c (147 aa).

It belongs to the universal ribosomal protein uL22 family. In terms of assembly, part of the 50S ribosomal subunit.

The protein resides in the plastid. In terms of biological role, this protein binds specifically to 23S rRNA. The globular domain of the protein is located near the polypeptide exit tunnel on the outside of the subunit, while an extended beta-hairpin is found that lines the wall of the exit tunnel in the center of the 70S ribosome. This chain is Large ribosomal subunit protein uL22c (rpl22), found in Cuscuta gronovii (Common dodder).